Consider the following 1282-residue polypeptide: Cytokine receptor (1282 aa).

An N-terminal signal peptide occupies residues 1-23; it reads MVAQEQLVLLLMLLAGCRGGANA. The Extracellular portion of the chain corresponds to 24 to 889; the sequence is ILDPGWVIPS…CTPDTHSVKA (866 aa). Asn-44, Asn-86, Asn-87, and Asn-114 each carry an N-linked (GlcNAc...) asparagine glycan. Cysteines 47 and 106 form a disulfide. 7 consecutive Fibronectin type-III domains span residues 124–220, 227–327, 329–431, 436–535, 537–631, 635–735, and 736–836; these read PLLV…NHFE, PGQN…TAPA, PRRP…SNRD, EPRN…KKDD, AKME…TGEA, QPRE…TAIG, and VPSP…LMST. Cys-132 and Cys-142 form a disulfide bridge. 2 N-linked (GlcNAc...) asparagine glycosylation sites follow: Asn-143 and Asn-156. An intrachain disulfide couples Cys-173 to Cys-183. 9 N-linked (GlcNAc...) asparagine glycosylation sites follow: Asn-184, Asn-230, Asn-235, Asn-278, Asn-298, Asn-310, Asn-376, Asn-448, and Asn-466. Residues Cys-472 and Cys-482 are joined by a disulfide bond. 8 N-linked (GlcNAc...) asparagine glycosylation sites follow: Asn-568, Asn-581, Asn-626, Asn-676, Asn-703, Asn-777, Asn-790, and Asn-862. The helical transmembrane segment at 890–910 threads the bilayer; sequence MYQTIEVTVAILVLGVIFYLV. Residues 911-1282 are Cytoplasmic-facing; the sequence is YKKYRKMSDI…NAMAHNRHVL (372 aa). Ser-976 bears the Phosphoserine mark. Disordered regions lie at residues 989–1092 and 1238–1258; these read TASS…HTFS and TVGS…QHSR. Composition is skewed to basic and acidic residues over residues 999 to 1009 and 1033 to 1064; these read VDRDGYDDNHE and NDRE…DREQ.

Belongs to the type I cytokine receptor family. In terms of assembly, interacts with wdp; the interaction promotes internalization of dome and its subsequent lysosomal degradation; thereby reducing JAK/STAT signaling. Undergoes lysosomal degradation. In terms of tissue distribution, in stage 11 embryos, tracheal pits show highest expression, at stage 14 high expression is detected in the posterior spiracles, gut and head.

The protein resides in the apicolateral cell membrane. Functionally, critical for epithelial morphogenesis during oogenesis; border cell migration. Required in the germarium for the polarization of follicle cells during encapsulation of germline cells. Required for embryonic segmentation and trachea specification. Essential receptor molecule for upd and JAK/STAT signaling during oogenesis. This chain is Cytokine receptor (dome), found in Drosophila melanogaster (Fruit fly).